The primary structure comprises 272 residues: Indole-3-glycerol phosphate synthase (272 aa).

The protein belongs to the TrpC family.

It catalyses the reaction 1-(2-carboxyphenylamino)-1-deoxy-D-ribulose 5-phosphate + H(+) = (1S,2R)-1-C-(indol-3-yl)glycerol 3-phosphate + CO2 + H2O. The protein operates within amino-acid biosynthesis; L-tryptophan biosynthesis; L-tryptophan from chorismate: step 4/5. This is Indole-3-glycerol phosphate synthase from Mycobacteroides abscessus (strain ATCC 19977 / DSM 44196 / CCUG 20993 / CIP 104536 / JCM 13569 / NCTC 13031 / TMC 1543 / L948) (Mycobacterium abscessus).